The sequence spans 444 residues: UDP-N-acetylglucosamine 1-carboxyvinyltransferase (444 aa).

22–23 (KN) is a binding site for phosphoenolpyruvate. Arg-94 serves as a coordination point for UDP-N-acetyl-alpha-D-glucosamine. Catalysis depends on Asp-119, which acts as the Proton donor. 2 residues coordinate UDP-N-acetyl-alpha-D-glucosamine: Asp-309 and Val-331.

Belongs to the EPSP synthase family. MurA subfamily.

Its subcellular location is the cytoplasm. The catalysed reaction is phosphoenolpyruvate + UDP-N-acetyl-alpha-D-glucosamine = UDP-N-acetyl-3-O-(1-carboxyvinyl)-alpha-D-glucosamine + phosphate. It functions in the pathway cell wall biogenesis; peptidoglycan biosynthesis. Functionally, cell wall formation. Adds enolpyruvyl to UDP-N-acetylglucosamine. The polypeptide is UDP-N-acetylglucosamine 1-carboxyvinyltransferase (Chlamydia trachomatis serovar D (strain ATCC VR-885 / DSM 19411 / UW-3/Cx)).